Here is a 282-residue protein sequence, read N- to C-terminus: tRNA pseudouridine synthase B (282 aa).

Asp-39 serves as the catalytic Nucleophile.

This sequence belongs to the pseudouridine synthase TruB family. Type 1 subfamily.

The enzyme catalyses uridine(55) in tRNA = pseudouridine(55) in tRNA. Functionally, responsible for synthesis of pseudouridine from uracil-55 in the psi GC loop of transfer RNAs. The sequence is that of tRNA pseudouridine synthase B from Borreliella afzelii (strain PKo) (Borrelia afzelii).